The sequence spans 319 residues: Acetyl-coenzyme A carboxylase carboxyl transferase subunit alpha (319 aa).

One can recognise a CoA carboxyltransferase C-terminal domain in the interval 35 to 296 (DLDKEIEQLE…KATLLRQLAE (262 aa)).

This sequence belongs to the AccA family. In terms of assembly, acetyl-CoA carboxylase is a heterohexamer composed of biotin carboxyl carrier protein (AccB), biotin carboxylase (AccC) and two subunits each of ACCase subunit alpha (AccA) and ACCase subunit beta (AccD).

The protein resides in the cytoplasm. The catalysed reaction is N(6)-carboxybiotinyl-L-lysyl-[protein] + acetyl-CoA = N(6)-biotinyl-L-lysyl-[protein] + malonyl-CoA. Its pathway is lipid metabolism; malonyl-CoA biosynthesis; malonyl-CoA from acetyl-CoA: step 1/1. Component of the acetyl coenzyme A carboxylase (ACC) complex. First, biotin carboxylase catalyzes the carboxylation of biotin on its carrier protein (BCCP) and then the CO(2) group is transferred by the carboxyltransferase to acetyl-CoA to form malonyl-CoA. The chain is Acetyl-coenzyme A carboxylase carboxyl transferase subunit alpha from Vibrio vulnificus (strain CMCP6).